A 179-amino-acid polypeptide reads, in one-letter code: Adenine phosphoribosyltransferase (179 aa).

The protein belongs to the purine/pyrimidine phosphoribosyltransferase family. As to quaternary structure, homodimer.

The protein localises to the cytoplasm. The enzyme catalyses AMP + diphosphate = 5-phospho-alpha-D-ribose 1-diphosphate + adenine. It participates in purine metabolism; AMP biosynthesis via salvage pathway; AMP from adenine: step 1/1. Its function is as follows. Catalyzes a salvage reaction resulting in the formation of AMP, that is energically less costly than de novo synthesis. This is Adenine phosphoribosyltransferase from Helicobacter pylori (strain J99 / ATCC 700824) (Campylobacter pylori J99).